The sequence spans 444 residues: Guanosine nucleotide diphosphate dissociation inhibitor 2 (444 aa).

This sequence belongs to the Rab GDI family. In terms of tissue distribution, expressed in roots and floral buds.

In terms of biological role, regulates the GDP/GTP exchange reaction of most RAB proteins by inhibiting the dissociation of GDP from them, and the subsequent binding of GTP. This chain is Guanosine nucleotide diphosphate dissociation inhibitor 2 (GDI2), found in Arabidopsis thaliana (Mouse-ear cress).